A 417-amino-acid polypeptide reads, in one-letter code: NADH-quinone oxidoreductase subunit D (417 aa).

Belongs to the complex I 49 kDa subunit family. In terms of assembly, NDH-1 is composed of 14 different subunits. Subunits NuoB, C, D, E, F, and G constitute the peripheral sector of the complex.

The protein resides in the cell inner membrane. It carries out the reaction a quinone + NADH + 5 H(+)(in) = a quinol + NAD(+) + 4 H(+)(out). In terms of biological role, NDH-1 shuttles electrons from NADH, via FMN and iron-sulfur (Fe-S) centers, to quinones in the respiratory chain. The immediate electron acceptor for the enzyme in this species is believed to be ubiquinone. Couples the redox reaction to proton translocation (for every two electrons transferred, four hydrogen ions are translocated across the cytoplasmic membrane), and thus conserves the redox energy in a proton gradient. The protein is NADH-quinone oxidoreductase subunit D of Francisella philomiragia subsp. philomiragia (strain ATCC 25017 / CCUG 19701 / FSC 153 / O#319-036).